A 252-amino-acid chain; its full sequence is ATP synthase subunit a (252 aa).

The next 6 helical transmembrane spans lie at 29–49, 87–107, 117–137, 146–166, 188–208, and 211–231; these read FTNS…FLFL, FFPL…LGLF, IIVT…YGFM, LFVP…IEVI, ITLK…AVGV, and SILP…VAFL.

Belongs to the ATPase A chain family. In terms of assembly, F-type ATPases have 2 components, CF(1) - the catalytic core - and CF(0) - the membrane proton channel. CF(1) has five subunits: alpha(3), beta(3), gamma(1), delta(1), epsilon(1). CF(0) has three main subunits: a(1), b(2) and c(9-12). The alpha and beta chains form an alternating ring which encloses part of the gamma chain. CF(1) is attached to CF(0) by a central stalk formed by the gamma and epsilon chains, while a peripheral stalk is formed by the delta and b chains.

It is found in the cell inner membrane. Its function is as follows. Key component of the proton channel; it plays a direct role in the translocation of protons across the membrane. The sequence is that of ATP synthase subunit a from Mesorhizobium japonicum (strain LMG 29417 / CECT 9101 / MAFF 303099) (Mesorhizobium loti (strain MAFF 303099)).